The primary structure comprises 143 residues: Large ribosomal subunit protein uL11 (143 aa).

The protein belongs to the universal ribosomal protein uL11 family. Part of the ribosomal stalk of the 50S ribosomal subunit. Interacts with L10 and the large rRNA to form the base of the stalk. L10 forms an elongated spine to which L12 dimers bind in a sequential fashion forming a multimeric L10(L12)X complex. In terms of processing, one or more lysine residues are methylated.

In terms of biological role, forms part of the ribosomal stalk which helps the ribosome interact with GTP-bound translation factors. The chain is Large ribosomal subunit protein uL11 from Novosphingobium aromaticivorans (strain ATCC 700278 / DSM 12444 / CCUG 56034 / CIP 105152 / NBRC 16084 / F199).